The primary structure comprises 876 residues: AP-1 complex subunit gamma-1 (876 aa).

HEAT repeat units lie at residues 97–135, 136–173, 248–284, 308–345, 346–382, 384–417, 418–454, 506–545, and 560–599; these read DERQ…ICSA, EMAR…KVPD, FLHI…KTES, SLRV…FDDQ, AVQR…ENNV, QLTK…KFSP, EKLW…NASE, VTES…RFPS, and SLLL…ATFN. Residues 756 to 873 form the GAE domain; sequence PAYAPIVAYE…LEEGQVSNFP (118 aa).

The protein belongs to the adaptor complexes large subunit family. In terms of assembly, adaptor protein complex 1 (AP-1) is a heterotetramer composed of two large adaptins (gamma-type subunit and beta-type subunit), a medium adaptin (mu-type subunit) and a small adaptin (sigma-type subunit). Binds to EPSIN1. Interacts with DRP2A/ADL6 (via C-terminus).

The protein resides in the golgi apparatus. It is found in the cytoplasmic vesicle. Its subcellular location is the clathrin-coated vesicle membrane. In terms of biological role, subunit of clathrin-associated adaptor protein complex 1 that plays a role in protein sorting at the trans-Golgi network and early endosomes (TGN/EE). The AP complexes mediate both the recruitment of clathrin to membranes and the recognition of sorting signals within the cytosolic tails of transmembrane cargo molecules. In Arabidopsis thaliana (Mouse-ear cress), this protein is AP-1 complex subunit gamma-1 (GAMMA-ADR).